The chain runs to 209 residues: Ribosomal RNA large subunit methyltransferase E (209 aa).

Residues Gly63, Trp65, Asp83, Asp99, and Asp124 each coordinate S-adenosyl-L-methionine. Residue Lys164 is the Proton acceptor of the active site.

It belongs to the class I-like SAM-binding methyltransferase superfamily. RNA methyltransferase RlmE family.

It is found in the cytoplasm. It catalyses the reaction uridine(2552) in 23S rRNA + S-adenosyl-L-methionine = 2'-O-methyluridine(2552) in 23S rRNA + S-adenosyl-L-homocysteine + H(+). Specifically methylates the uridine in position 2552 of 23S rRNA at the 2'-O position of the ribose in the fully assembled 50S ribosomal subunit. The sequence is that of Ribosomal RNA large subunit methyltransferase E from Aeromonas hydrophila subsp. hydrophila (strain ATCC 7966 / DSM 30187 / BCRC 13018 / CCUG 14551 / JCM 1027 / KCTC 2358 / NCIMB 9240 / NCTC 8049).